We begin with the raw amino-acid sequence, 221 residues long: MSETAPLAPTIPAPAEKTPVKKKAKKAGATAGKRKASGPPVSELITKAVAASKERSGVSLAALKKALAAAGYDVEKNNSRIKLGLKSLVSKGTLVQTKGTGASGSFKLNKKAASGEGKPKAKKAGAAKPRKPAGAAKKPKKVAGAATPKKSIKKTPKKVKKPATAAGTKKVAKSAKKVKTPQPKKAAKSPAKAKAPKPKAAKPKSGKPKVTKAKKAAPKKK.

Residues 1–17 (MSETAPLAPTIPAPAEK) show a composition bias toward low complexity. The tract at residues 1–43 (MSETAPLAPTIPAPAEKTPVKKKAKKAGATAGKRKASGPPVSE) is disordered. An N-acetylserine modification is found at Ser-2. Phosphoserine is present on Ser-2. An N6-acetyllysine modification is found at Lys-17. Position 18 is a phosphothreonine (Thr-18). Residues 20–36 (VKKKAKKAGATAGKRKA) are compositionally biased toward basic residues. Residues Lys-35, Lys-47, and Lys-53 each carry the N6-(beta-hydroxybutyryl)lysine modification. Residues 37 to 110 (SGPPVSELIT…GASGSFKLNK (74 aa)) enclose the H15 domain. Arg-55 carries the post-translational modification Citrulline. Residues Lys-65, Lys-76, Lys-86, and Lys-91 each carry the N6-(beta-hydroxybutyryl)lysine modification. The interval 90–221 (SKGTLVQTKG…KAKKAAPKKK (132 aa)) is disordered. The residue at position 105 (Ser-105) is a Phosphoserine; by PKC. N6-(beta-hydroxybutyryl)lysine is present on Lys-107. 3 stretches are compositionally biased toward basic residues: residues 120–141 (KAKKAGAAKPRKPAGAAKKPKK), 150–161 (KSIKKTPKKVKK), and 170–179 (KVAKSAKKVK). Lys-170 carries the N6-(beta-hydroxybutyryl)lysine modification. Low complexity predominate over residues 180 to 193 (TPQPKKAAKSPAKA). Residues 194–221 (KAPKPKAAKPKSGKPKVTKAKKAAPKKK) are compositionally biased toward basic residues.

The protein belongs to the histone H1/H5 family. Post-translationally, H1 histones are progressively phosphorylated during the cell cycle, becoming maximally phosphorylated during late G2 phase and M phase, and being dephosphorylated sharply thereafter. Citrullination at Arg-55 (H1R54ci) by PADI4 takes place within the DNA-binding site of H1 and results in its displacement from chromatin and global chromatin decondensation, thereby promoting pluripotency and stem cell maintenance.

Its subcellular location is the nucleus. It is found in the chromosome. Its function is as follows. Histone H1 protein binds to linker DNA between nucleosomes forming the macromolecular structure known as the chromatin fiber. Histones H1 are necessary for the condensation of nucleosome chains into higher-order structured fibers. Also acts as a regulator of individual gene transcription through chromatin remodeling, nucleosome spacing and DNA methylation. In Homo sapiens (Human), this protein is Histone H1.3.